A 601-amino-acid polypeptide reads, in one-letter code: Glutathione-regulated potassium-efflux system protein KefB (601 aa).

13 helical membrane passes run A4 to A24, I29 to F49, E55 to L75, I87 to M107, F111 to A131, V152 to G172, H177 to G197, F207 to S227, L230 to L250, A262 to L282, L284 to I304, M324 to A344, and A356 to I376. In terms of domain architecture, RCK N-terminal spans K400–T519.

Belongs to the monovalent cation:proton antiporter 2 (CPA2) transporter (TC 2.A.37) family. KefB subfamily. As to quaternary structure, interacts with the regulatory subunit KefG.

The protein localises to the cell inner membrane. Pore-forming subunit of a potassium efflux system that confers protection against electrophiles. Catalyzes K(+)/H(+) antiport. This chain is Glutathione-regulated potassium-efflux system protein KefB, found in Salmonella enteritidis PT4 (strain P125109).